The sequence spans 427 residues: 4-hydroxy-3-methylbut-2-en-1-yl diphosphate synthase (flavodoxin) (427 aa).

4 residues coordinate [4Fe-4S] cluster: cysteine 300, cysteine 303, cysteine 346, and glutamate 353.

The protein belongs to the IspG family. Requires [4Fe-4S] cluster as cofactor.

The enzyme catalyses (2E)-4-hydroxy-3-methylbut-2-enyl diphosphate + oxidized [flavodoxin] + H2O + 2 H(+) = 2-C-methyl-D-erythritol 2,4-cyclic diphosphate + reduced [flavodoxin]. It functions in the pathway isoprenoid biosynthesis; isopentenyl diphosphate biosynthesis via DXP pathway; isopentenyl diphosphate from 1-deoxy-D-xylulose 5-phosphate: step 5/6. Functionally, converts 2C-methyl-D-erythritol 2,4-cyclodiphosphate (ME-2,4cPP) into 1-hydroxy-2-methyl-2-(E)-butenyl 4-diphosphate. The protein is 4-hydroxy-3-methylbut-2-en-1-yl diphosphate synthase (flavodoxin) of Chromobacterium violaceum (strain ATCC 12472 / DSM 30191 / JCM 1249 / CCUG 213 / NBRC 12614 / NCIMB 9131 / NCTC 9757 / MK).